The following is a 367-amino-acid chain: D-alanine--D-alanine ligase (367 aa).

The ATP-grasp domain occupies 141–346; the sequence is KNLFAQAGLR…YPELIERLIA (206 aa). 174 to 229 lines the ATP pocket; it reads ERELGYPCFVKPANAGSSVGISKCKQRGDLKAAFIEAFQYDRKIIIEEAIVGREIE. 3 residues coordinate Mg(2+): Asp300, Glu313, and Asn315.

This sequence belongs to the D-alanine--D-alanine ligase family. The cofactor is Mg(2+). Mn(2+) is required as a cofactor.

Its subcellular location is the cytoplasm. The enzyme catalyses 2 D-alanine + ATP = D-alanyl-D-alanine + ADP + phosphate + H(+). It functions in the pathway cell wall biogenesis; peptidoglycan biosynthesis. In terms of biological role, cell wall formation. The sequence is that of D-alanine--D-alanine ligase from Geobacillus kaustophilus (strain HTA426).